The chain runs to 531 residues: 5-(hydroxymethyl)furfural oxidase (531 aa).

Residues 15–16, 36–37, Trp68, Leu94, Gly98, 102–105, Val233, and Trp466 each bind FAD; these read TA, EA, and NMVV. The active-site Proton acceptor is the His467. Residues Ala501 and 512–513 each bind FAD; that span reads TN.

The protein belongs to the GMC oxidoreductase family. In terms of assembly, monomer. FAD is required as a cofactor.

The enzyme catalyses 5-hydroxymethylfurfural + 3 O2 + 2 H2O = 2,5-dicarboxyfuran + 3 H2O2 + 2 H(+). It catalyses the reaction benzylthiol + O2 = benzothialdehyde + H2O2. Functionally, involved in the degradation and detoxification of 5-(hydroxymethyl)furfural (HMF) by mediating its oxidation to furan-2,5-dicarboxylate (FDCA), a biobased platform chemical for the production of polymers. Active with a wide range of aromatic and aliphatic primary alcohols and aldehydes: acts on alcohol groups and requires the spontaneous hydration of aldehyde groups for their oxidation. To a lesser extent, is also able to catalyze the oxidation of thiols that are structurally similar to its alcohol substrates, yielding the corresponding thiocarbonyls. This chain is 5-(hydroxymethyl)furfural oxidase, found in Methylovorus sp. (strain MP688).